Here is a 287-residue protein sequence, read N- to C-terminus: MDEIVKNIREGTHVLLPFYETLPELNLSLGKSPLPSLEYGANYFLQISRVNDLNRMPTDMLKLFTHDIMLPESDLDKVYEILKINSVKYYGRSTKADAVVADLSARNKLFKRERDAIKSNNHLTENNLYISDYKMLTFDVFRPLFDFVNEKYCIIKLPTLFGRGVIDTMRIYCSLFKNVRLLKCVSDSWLKDSAIMVASDVCKKNLDLFMSHVKSVTKSSSWKDVNSVQFSILNDPVDTEFINKFLEFSNRVYEALYYVHSLLYSSMTSDSKSIENKHQRRLVKLLL.

This sequence belongs to the orthopoxvirus mRNA-capping enzyme regulatory subunit family. As to quaternary structure, interacts with the catalytic subunit OPG113.

The protein resides in the virion. Regulatory subunit of the mRNA cap enzyme which stabilizes the catalytic subunit and enhances its methyltransferase activity through an allosteric mechanism. Heterodimeric mRNA capping enzyme catalyzes the linkage of a N7-methyl-guanosine moiety to the first transcribed nucleotide (cap 0 structure), whereas the methyltransferase OPG102 is responsible for a second methylation at the 2'-O position of the ribose (cap 1 structure). Also involved in early viral gene transcription termination and intermediate viral gene transcription initiation. Early gene transcription termination requires the termination factor VTF, the DNA-dependent ATPase NPH-I/OPG123 and the RAP94/OPG109 subunit of the viral RNA polymerase, as well as the presence of a specific termination motif. Binds, together with RAP94/OPG109, to the termination motif 5'-UUUUUNU-3' in the nascent early mRNA. In Vaccinia virus (strain Copenhagen) (VACV), this protein is mRNA-capping enzyme regulatory subunit OPG124 (OPG124).